Here is a 297-residue protein sequence, read N- to C-terminus: Protein AKTIP homolog (297 aa).

Residues 13–75 (FLSDLDEKSS…QRSPSGSSPE (63 aa)) are disordered. The segment covering 17 to 42 (LDEKSSSSPHDEKKPGDGREVREEKS) has biased composition (basic and acidic residues). Polar residues predominate over residues 59–75 (MNLSIARQRSPSGSSPE). In terms of domain architecture, UBC core spans 84–232 (FLEYTLMAEY…VNECLRRCHN (149 aa)).

The protein belongs to the ubiquitin-conjugating enzyme family. FTS subfamily.

The sequence is that of Protein AKTIP homolog from Nematostella vectensis (Starlet sea anemone).